We begin with the raw amino-acid sequence, 252 residues long: Ribosomal RNA small subunit methyltransferase J (252 aa).

S-adenosyl-L-methionine contacts are provided by residues 101 to 102 (RD), 117 to 118 (ER), 153 to 154 (SS), and Asp171.

Belongs to the methyltransferase superfamily. RsmJ family.

The protein localises to the cytoplasm. The enzyme catalyses guanosine(1516) in 16S rRNA + S-adenosyl-L-methionine = N(2)-methylguanosine(1516) in 16S rRNA + S-adenosyl-L-homocysteine + H(+). In terms of biological role, specifically methylates the guanosine in position 1516 of 16S rRNA. This is Ribosomal RNA small subunit methyltransferase J from Pseudoalteromonas translucida (strain TAC 125).